The following is a 217-amino-acid chain: MAILEIVKEPAEVLRKKAKPVTKINASIRKLLDDMTETMYAAPGVGLAAPQVGVSKRLIVVDPQDGSGQLYQLINPEIVKAEGWVKGTEGCLSIPGMVGDVWRYEKVQVVALDRTGKKVWIDAEGYLARIFQHEIDHLDGILYTDKCTNLRPVSEDGEEEEEAEVAEVMPEPEAEGAGEPSAEGAGQAAAEAGAEEGEQVTTGVSGERRGSAAAKEE.

Positions 91 and 133 each coordinate Fe cation. Glu-134 is an active-site residue. His-137 serves as a coordination point for Fe cation. A disordered region spans residues 153–217 (VSEDGEEEEE…RRGSAAAKEE (65 aa)). A compositionally biased stretch (acidic residues) spans 155–176 (EDGEEEEEAEVAEVMPEPEAEG). The span at 177–192 (AGEPSAEGAGQAAAEA) shows a compositional bias: low complexity. Residues 206 to 217 (GERRGSAAAKEE) show a composition bias toward basic and acidic residues.

The protein belongs to the polypeptide deformylase family. Fe(2+) is required as a cofactor.

The catalysed reaction is N-terminal N-formyl-L-methionyl-[peptide] + H2O = N-terminal L-methionyl-[peptide] + formate. Removes the formyl group from the N-terminal Met of newly synthesized proteins. Requires at least a dipeptide for an efficient rate of reaction. N-terminal L-methionine is a prerequisite for activity but the enzyme has broad specificity at other positions. The protein is Peptide deformylase of Symbiobacterium thermophilum (strain DSM 24528 / JCM 14929 / IAM 14863 / T).